The chain runs to 123 residues: Ribosome-binding factor A (123 aa).

This sequence belongs to the RbfA family. As to quaternary structure, monomer. Binds 30S ribosomal subunits, but not 50S ribosomal subunits or 70S ribosomes.

The protein resides in the cytoplasm. Functionally, one of several proteins that assist in the late maturation steps of the functional core of the 30S ribosomal subunit. Associates with free 30S ribosomal subunits (but not with 30S subunits that are part of 70S ribosomes or polysomes). Required for efficient processing of 16S rRNA. May interact with the 5'-terminal helix region of 16S rRNA. The sequence is that of Ribosome-binding factor A from Geotalea daltonii (strain DSM 22248 / JCM 15807 / FRC-32) (Geobacter daltonii).